The following is a 179-amino-acid chain: Large ribosomal subunit protein uL5 (179 aa).

It belongs to the universal ribosomal protein uL5 family. Part of the 50S ribosomal subunit; part of the 5S rRNA/L5/L18/L25 subcomplex. Contacts the 5S rRNA and the P site tRNA. Forms a bridge to the 30S subunit in the 70S ribosome.

In terms of biological role, this is one of the proteins that bind and probably mediate the attachment of the 5S RNA into the large ribosomal subunit, where it forms part of the central protuberance. In the 70S ribosome it contacts protein S13 of the 30S subunit (bridge B1b), connecting the 2 subunits; this bridge is implicated in subunit movement. Contacts the P site tRNA; the 5S rRNA and some of its associated proteins might help stabilize positioning of ribosome-bound tRNAs. The chain is Large ribosomal subunit protein uL5 from Prochlorococcus marinus (strain NATL1A).